The chain runs to 428 residues: Adenylosuccinate synthetase (428 aa).

Residues 11–17 and 39–41 contribute to the GTP site; these read GDEGKGK and GHT. Aspartate 12 (proton acceptor) is an active-site residue. Mg(2+) is bound by residues aspartate 12 and glycine 39. Residues 12 to 15, 37 to 40, threonine 130, arginine 144, asparagine 226, threonine 241, and arginine 305 contribute to the IMP site; these read DEGK and NAGH. Residue histidine 40 is the Proton donor of the active site. 301 to 307 is a substrate binding site; that stretch reads VTTGRKR. GTP-binding positions include arginine 307, 333–335, and 415–417; these read KLD and GTG.

The protein belongs to the adenylosuccinate synthetase family. In terms of assembly, homodimer. Mg(2+) serves as cofactor.

It is found in the cytoplasm. The catalysed reaction is IMP + L-aspartate + GTP = N(6)-(1,2-dicarboxyethyl)-AMP + GDP + phosphate + 2 H(+). It participates in purine metabolism; AMP biosynthesis via de novo pathway; AMP from IMP: step 1/2. Functionally, plays an important role in the de novo pathway and in the salvage pathway of purine nucleotide biosynthesis. Catalyzes the first committed step in the biosynthesis of AMP from IMP. This Komagataella phaffii (strain GS115 / ATCC 20864) (Yeast) protein is Adenylosuccinate synthetase.